The chain runs to 436 residues: YRLTYYTPDNQVSETDILAAFRMTPQPGVPAEECGAAVAAESSTGTWTTVWTDGLTQLDRDKGRCYDLEPVPGESNQYIAYVAYPIDLFEEGSVTNLLTSIVGNVFGFKALRALRLEDLRIPPAYSKTFWGPPHGIQVERDRLNKYGRPLLGCTIKPKLGLSAKNYGRAVYECLRGGLDFTKDDENVNSQSFMRWRDRFLFCAEAIYKAQTETGEVKGHYLNATAGTCEEMYKRASFAAQIGVPIIMHDYLTGGFTANTSLAMYCRDNGLLLHIHRAMHAVIDRQRNHGIHFRVLAKTLRMSGGDHLHSGTVVGKLEGEREVTLGFVDLMRDAYVEKDRSRGIYFTQDWCGMGGTMPVASGGIHVWHMPALTEIFGDDACLQFGGGTLGHPWGNAPGAAANRVASEACVQARNEGRDLSREGGDVIREACKWSPEL.

Asn-104 and Thr-154 together coordinate substrate. The active-site Proton acceptor is the Lys-156. Residue Lys-158 participates in substrate binding. Mg(2+) is bound by residues Lys-182, Asp-184, and Glu-185. Lys-182 is subject to N6-carboxylysine. His-275 serves as the catalytic Proton acceptor. Substrate is bound by residues Arg-276, His-308, and Ser-360.

It belongs to the RuBisCO large chain family. Type I subfamily. As to quaternary structure, heterohexadecamer of 8 large chains and 8 small chains; disulfide-linked. The disulfide link is formed within the large subunit homodimers. Mg(2+) is required as a cofactor. In terms of processing, the disulfide bond which can form in the large chain dimeric partners within the hexadecamer appears to be associated with oxidative stress and protein turnover.

The protein localises to the plastid. It localises to the chloroplast. It catalyses the reaction 2 (2R)-3-phosphoglycerate + 2 H(+) = D-ribulose 1,5-bisphosphate + CO2 + H2O. It carries out the reaction D-ribulose 1,5-bisphosphate + O2 = 2-phosphoglycolate + (2R)-3-phosphoglycerate + 2 H(+). Functionally, ruBisCO catalyzes two reactions: the carboxylation of D-ribulose 1,5-bisphosphate, the primary event in carbon dioxide fixation, as well as the oxidative fragmentation of the pentose substrate in the photorespiration process. Both reactions occur simultaneously and in competition at the same active site. The sequence is that of Ribulose bisphosphate carboxylase large chain from Euglena geniculata.